An 89-amino-acid polypeptide reads, in one-letter code: Large ribosomal subunit protein uL23cz/uL23cy (89 aa).

This sequence belongs to the universal ribosomal protein uL23 family. In terms of assembly, part of the 50S ribosomal subunit.

The protein localises to the plastid. It is found in the chloroplast. Binds to 23S rRNA. The chain is Large ribosomal subunit protein uL23cz/uL23cy (rpl23-A) from Pelargonium hortorum (Common geranium).